We begin with the raw amino-acid sequence, 189 residues long: Ribosome hibernation promotion factor (189 aa).

It belongs to the HPF/YfiA ribosome-associated protein family. Long HPF subfamily. In terms of assembly, interacts with 100S ribosomes. Not associated with 70S ribosome monomers, about 1 monomer per ribosome.

It is found in the cytoplasm. Its function is as follows. Required for dimerization of active 70S ribosomes into 100S ribosomes in stationary phase; 100S ribosomes are translationally inactive and sometimes present during exponential growth. May not be the only factor implicated. Might negatively regulate the activity of the sigma-54 factor (SigL). This chain is Ribosome hibernation promotion factor (yvyD), found in Bacillus subtilis (strain 168).